The primary structure comprises 343 residues: S-adenosylmethionine:tRNA ribosyltransferase-isomerase (343 aa).

It belongs to the QueA family. In terms of assembly, monomer.

It is found in the cytoplasm. It carries out the reaction 7-aminomethyl-7-carbaguanosine(34) in tRNA + S-adenosyl-L-methionine = epoxyqueuosine(34) in tRNA + adenine + L-methionine + 2 H(+). Its pathway is tRNA modification; tRNA-queuosine biosynthesis. Its function is as follows. Transfers and isomerizes the ribose moiety from AdoMet to the 7-aminomethyl group of 7-deazaguanine (preQ1-tRNA) to give epoxyqueuosine (oQ-tRNA). This Coxiella burnetii (strain RSA 331 / Henzerling II) protein is S-adenosylmethionine:tRNA ribosyltransferase-isomerase.